A 148-amino-acid chain; its full sequence is Probable 4-amino-4-deoxy-L-arabinose-phosphoundecaprenol flippase subunit ArnF (148 aa).

Over 1 to 23 (MRGDNTGVGKEPAVTERPAIKGY) the chain is Cytoplasmic. The chain crosses the membrane as a helical span at residues 24 to 44 (LYVLGSILLVTLAQLAMKWGV). Over 45–63 (MQLPAWQASLDIMLAHPVP) the chain is Periplasmic. Residues 64-84 (LLVITAGVGCYALSLLCWLAA) traverse the membrane as a helical segment. Residues 85 to 91 (LHFTPLN) lie on the Cytoplasmic side of the membrane. A helical membrane pass occupies residues 92 to 112 (IAYPLLSTSYALVYLLAVSIP). The Periplasmic portion of the chain corresponds to 113–117 (SFAEP). A helical membrane pass occupies residues 118-138 (LEPGKAVGVIFILLGAVLVGI). The Cytoplasmic segment spans residues 139 to 148 (KPVGRKRNAH).

It belongs to the ArnF family. As to quaternary structure, heterodimer of ArnE and ArnF.

The protein resides in the cell inner membrane. It participates in bacterial outer membrane biogenesis; lipopolysaccharide biosynthesis. Functionally, translocates 4-amino-4-deoxy-L-arabinose-phosphoundecaprenol (alpha-L-Ara4N-phosphoundecaprenol) from the cytoplasmic to the periplasmic side of the inner membrane. This Aeromonas salmonicida (strain A449) protein is Probable 4-amino-4-deoxy-L-arabinose-phosphoundecaprenol flippase subunit ArnF.